A 446-amino-acid polypeptide reads, in one-letter code: Probable beta-1,4-xylosyltransferase IRX9L (446 aa).

The disordered stretch occupies residues 1 to 26 (MSRRNAGAMQREGSVKDWEEFDPSPS). The Cytoplasmic segment spans residues 1-85 (MSRRNAGAMQ…SRSKGMSLKR (85 aa)). The chain crosses the membrane as a helical; Signal-anchor for type II membrane protein span at residues 86 to 106 (AMLQLLVCFMVGIFIGFTPPF). Residues 107-446 (SVDLPGKIAS…RNLDAVVPIT (340 aa)) lie on the Lumenal side of the membrane. Asparagine 185, asparagine 258, asparagine 361, and asparagine 411 each carry an N-linked (GlcNAc...) asparagine glycan.

This sequence belongs to the glycosyltransferase 43 family.

Its subcellular location is the golgi apparatus membrane. Its function is as follows. Probable beta-1,4-xylosyltransferase involved in xylan biosynthesis in cell walls. This Oryza sativa subsp. japonica (Rice) protein is Probable beta-1,4-xylosyltransferase IRX9L.